The primary structure comprises 608 residues: MSSKHWDYKKDLVLSHLAGLCQSNPHVRLIESERVVISAENQEDKITLISGGGSGHEPLHAGFVTKDGLLDAAVAGFIFASPSTKQIFSAIKAKPSKKGTLIIVKNYTGDILHFGLAAEKAKAEGLNAELLIVQDDVSVGKAKNGLVGRRGLAGTSLVHKILGAKAYLQKDNLELHQLVTFGEKVVANLVTIGASLDHVTIPARANKQEEDDSDDEHGYEVLKHDEFEIGMGIHNEPGIKKSSPIPTVDELVAELLEYLLSTTDKDRNYVQFDKNDEVVLLINNLGGTSVLELYAIQNIVVDQLASKYSIKPVRIFTGTFTTSLDGPGFSITLLNATKTGDKDILKFLDHKTSAPGWNSNISDWSGRVDNFIVAAPEIDEGDSSSKVSVDAKLYADLLESGVKKVISKEPKITLYDTVAGDGDCGETLANGSNAILKALAEGKLDLKDGVKSLVQITDIVETAMGGTSGGLYSIFISALAKSLKEKELSEGAYTLTLETISGSLQAALQSLFKYTRARTGDRTLIDALEPFVKEFAKSKDLKLANKAAHDGAEATRKLEAKFGRASYVAEEEFKQFESEGGLPDPGAIGLAALISGITDAYFKSETKL.

The DhaK domain maps to 8–357 (YKKDLVLSHL…LDHKTSAPGW (350 aa)). Substrate-binding positions include 53–56 (GSGH), Lys-105, and Asp-110. His-234 (tele-hemiaminal-histidine intermediate) is an active-site residue. Residues 392-599 (KLYADLLESG…LAALISGITD (208 aa)) enclose the DhaL domain. ATP-binding positions include 421–424 (DGDC), 467–468 (TS), 523–524 (TL), and 584–586 (DPG).

Belongs to the dihydroxyacetone kinase (DAK) family.

It is found in the cytoplasm. The catalysed reaction is dihydroxyacetone + ATP = dihydroxyacetone phosphate + ADP + H(+). It carries out the reaction D-glyceraldehyde + ATP = D-glyceraldehyde 3-phosphate + ADP + H(+). The protein operates within polyol metabolism; glycerol fermentation; glycerone phosphate from glycerol (oxidative route): step 2/2. Catalyzes both the phosphorylation of dihydroxyacetone and of glyceraldehyde. The polypeptide is Dihydroxyacetone kinase (DAK) (Komagataella pastoris (Yeast)).